Here is a 489-residue protein sequence, read N- to C-terminus: Beta-1,3-glucosyltransferase (489 aa).

A topological domain (cytoplasmic) is located at residue Met1. Residues 2 to 22 (RPPALLALFSCSAAFALMSEE) form a helical; Signal-anchor for type II membrane protein membrane-spanning segment. Over 23–489 (IKEKVTPSQD…ETQKDPREEL (467 aa)) the chain is Lumenal. Residue Asn78 is glycosylated (N-linked (GlcNAc...) asparagine). Residues 486–489 (REEL) carry the Prevents secretion from ER motif.

This sequence belongs to the glycosyltransferase 31 family.

It is found in the endoplasmic reticulum membrane. The protein operates within protein modification; protein glycosylation. Functionally, O-glucosyltransferase that transfers glucose toward fucose with a beta-1,3 linkage. Specifically glucosylates O-linked fucosylglycan on TSP type-1 domains of proteins, thereby contributing to elongation of O-fucosylglycan. This Mus musculus (Mouse) protein is Beta-1,3-glucosyltransferase.